Reading from the N-terminus, the 920-residue chain is Periplasmic nitrate reductase (920 aa).

The segment at residues 1 to 29 (MNRRDFIKSTAAAAACASAGIALPANLNA) is a signal peptide (tat-type signal). Residues 35–91 (WRWDKAVCRFCGTGCGIMVATKNGKIVAVKGDPEAPVNRGLNCIKGYFNAKIMYGDD) form the 4Fe-4S Mo/W bis-MGD-type domain. Positions 42, 45, 49, and 77 each coordinate [4Fe-4S] cluster. Mo-bis(molybdopterin guanine dinucleotide) contacts are provided by residues lysine 79, glutamine 147, asparagine 172, cysteine 176, 209–216 (WGANMAEM), methionine 416, glutamine 420, asparagine 526, 551–552 (SD), lysine 574, aspartate 601, and 810–819 (TGRVLEHWHS). Tryptophan 886 is a substrate binding site. Mo-bis(molybdopterin guanine dinucleotide) is bound by residues asparagine 894 and lysine 911.

It belongs to the prokaryotic molybdopterin-containing oxidoreductase family. NasA/NapA/NarB subfamily. In terms of assembly, component of the periplasmic nitrate reductase NapAB complex composed of NapA and NapB. [4Fe-4S] cluster serves as cofactor. Requires Mo-bis(molybdopterin guanine dinucleotide) as cofactor. Predicted to be exported by the Tat system. The position of the signal peptide cleavage has not been experimentally proven.

The protein resides in the periplasm. It catalyses the reaction 2 Fe(II)-[cytochrome] + nitrate + 2 H(+) = 2 Fe(III)-[cytochrome] + nitrite + H2O. Catalytic subunit of the periplasmic nitrate reductase complex NapAB. Receives electrons from NapB and catalyzes the reduction of nitrate to nitrite. In Campylobacter hominis (strain ATCC BAA-381 / DSM 21671 / CCUG 45161 / LMG 19568 / NCTC 13146 / CH001A), this protein is Periplasmic nitrate reductase.